The sequence spans 488 residues: Peptidoglycan endopeptidase LytF (488 aa).

The first 26 residues, 1-26 (MKKKLAAGLTASAIVGTTLVVTPAEA), serve as a signal peptide directing secretion. LysM domains lie at 27–70 (ATIK…TLTI) and 92–135 (SVYT…KLKV). Disordered regions lie at residues 70-93 (IPGS…GSSV), 137-176 (GTVS…TGTY), and 218-239 (KSSG…TSAT). Low complexity-rich tracts occupy residues 72 to 93 (GSKS…GSSV) and 140 to 172 (SSSS…SSSS). One can recognise a LysM 3 domain in the interval 174–217 (GTYKVQLGDSLWKIANKVNMSIAELKVLNNLKSDTIYVNQVLKT). Residues 240–283 (TKYTVKSGDSLWKIANNYNLTVQQIRNINNLKSDVLYVGQVLKL) form the LysM 4 domain. The segment at 286–306 (KASSGSSSSSSSSSNASSGTT) is disordered. The 44-residue stretch at 307-350 (TTYTVKSGDSLWVIAQKFNVTAQQIREKNNLKTDVLQVGQKLVI) folds into the LysM 5 domain. Residues 370-488 (SAKINTMISA…QRYLGAKRYF (119 aa)) enclose the NlpC/P60 domain. Cysteine 400 serves as the catalytic Nucleophile. The active-site Proton acceptor is the histidine 449. Asparagine 461 is an active-site residue.

Belongs to the peptidase C40 family.

It localises to the secreted. The protein resides in the cell wall. Is inhibited in vitro by para-hydroxymercuribenzoate, a sulfydryl inhibitor. Functionally, cell wall hydrolase that cleaves gamma-D-glutamate-meso-diaminopimelate bonds in peptidoglycan. LytF is necessary and sufficient for vegetative daughter cell separation, and also seems to play a role in cell autolysis. In Bacillus subtilis (strain 168), this protein is Peptidoglycan endopeptidase LytF (lytF).